The chain runs to 139 residues: Ribulose bisphosphate carboxylase small subunit (139 aa).

Belongs to the RuBisCO small chain family. As to quaternary structure, heterohexadecamer of 8 large and 8 small subunits.

Its subcellular location is the plastid. It localises to the chloroplast. Its function is as follows. RuBisCO catalyzes two reactions: the carboxylation of D-ribulose 1,5-bisphosphate, the primary event in carbon dioxide fixation, as well as the oxidative fragmentation of the pentose substrate in the photorespiration process. Both reactions occur simultaneously and in competition at the same active site. Although the small subunit is not catalytic it is essential for maximal activity. The chain is Ribulose bisphosphate carboxylase small subunit from Detonula confervacea (Marine diatom).